The sequence spans 324 residues: Quinolinate synthase 1 (324 aa).

Residues His48 and Ser66 each coordinate iminosuccinate. Residue Cys111 participates in [4Fe-4S] cluster binding. Iminosuccinate is bound by residues 137-139 (YVN) and Ser154. Residue Cys196 coordinates [4Fe-4S] cluster. Residues 222–224 (HPE) and Thr239 each bind iminosuccinate. A [4Fe-4S] cluster-binding site is contributed by Cys282.

This sequence belongs to the quinolinate synthase family. Type 2 subfamily. Requires [4Fe-4S] cluster as cofactor.

The protein resides in the cytoplasm. The catalysed reaction is iminosuccinate + dihydroxyacetone phosphate = quinolinate + phosphate + 2 H2O + H(+). Its pathway is cofactor biosynthesis; NAD(+) biosynthesis; quinolinate from iminoaspartate: step 1/1. Catalyzes the condensation of iminoaspartate with dihydroxyacetone phosphate to form quinolinate. This chain is Quinolinate synthase 1, found in Mesorhizobium japonicum (strain LMG 29417 / CECT 9101 / MAFF 303099) (Mesorhizobium loti (strain MAFF 303099)).